A 193-amino-acid polypeptide reads, in one-letter code: Ubiquitin-conjugating enzyme E2 E1 (193 aa).

The segment at methionine 1 to leucine 45 is disordered. Residue serine 2 is modified to N-acetylserine. Residues alanine 8–serine 18 are compositionally biased toward low complexity. Residues threonine 22–lysine 35 are compositionally biased toward basic and acidic residues. A compositionally biased stretch (polar residues) spans valine 36–leucine 45. One can recognise a UBC core domain in the interval threonine 47 to threonine 193. Residue cysteine 131 is the Glycyl thioester intermediate of the active site. Residue lysine 136 forms a Glycyl lysine isopeptide (Lys-Gly) (interchain with G-Cter in ISG15) linkage.

This sequence belongs to the ubiquitin-conjugating enzyme family. As to quaternary structure, interacts with RNF14. In terms of processing, ISGylation suppresses ubiquitin E2 enzyme activity. Post-translationally, autoubiquitinated.

It localises to the nucleus. It catalyses the reaction S-ubiquitinyl-[E1 ubiquitin-activating enzyme]-L-cysteine + [E2 ubiquitin-conjugating enzyme]-L-cysteine = [E1 ubiquitin-activating enzyme]-L-cysteine + S-ubiquitinyl-[E2 ubiquitin-conjugating enzyme]-L-cysteine.. The catalysed reaction is S-ubiquitinyl-[E1 ubiquitin-activating enzyme]-L-cysteine + [acceptor protein]-L-lysine = [E1 ubiquitin-activating enzyme]-L-cysteine + N(6)-monoubiquitinyl-[acceptor protein]-L-lysine.. The protein operates within protein modification; protein ubiquitination. Its function is as follows. Accepts ubiquitin from the E1 complex and catalyzes its covalent attachment to other proteins. Catalyzes the covalent attachment of ISG15 to other proteins. Mediates the selective degradation of short-lived and abnormal proteins. In vitro also catalyzes 'Lys-48'-linked polyubiquitination. The protein is Ubiquitin-conjugating enzyme E2 E1 (Ube2e1) of Mus musculus (Mouse).